Reading from the N-terminus, the 117-residue chain is Large ribosomal subunit protein uL18 (117 aa).

It belongs to the universal ribosomal protein uL18 family. Part of the 50S ribosomal subunit; part of the 5S rRNA/L5/L18/L25 subcomplex. Contacts the 5S and 23S rRNAs.

This is one of the proteins that bind and probably mediate the attachment of the 5S RNA into the large ribosomal subunit, where it forms part of the central protuberance. This chain is Large ribosomal subunit protein uL18, found in Polynucleobacter necessarius subsp. necessarius (strain STIR1).